Reading from the N-terminus, the 206-residue chain is Thymidylate kinase (206 aa).

An ATP-binding site is contributed by 11–18 (GIDGAGKT).

This sequence belongs to the thymidylate kinase family.

It carries out the reaction dTMP + ATP = dTDP + ADP. In terms of biological role, phosphorylation of dTMP to form dTDP in both de novo and salvage pathways of dTTP synthesis. In Burkholderia pseudomallei (strain 1106a), this protein is Thymidylate kinase.